The following is a 687-amino-acid chain: Dictomallein (687 aa).

2 disordered regions span residues 1-45 and 73-112; these read MGNG…SRRL and TAGG…STSA. The 269-residue stretch at 233 to 501 folds into the Peptidase M66 domain; that stretch reads PVFGTDADVQ…QAWIASRVLA (269 aa). H393 is a Zn(2+) binding site. The active site involves E394. Zn(2+)-binding residues include H397 and H403.

Belongs to the dictomallein family. Zn(2+) serves as cofactor.

In Burkholderia pseudomallei (strain 668), this protein is Dictomallein (dtmL).